A 294-amino-acid polypeptide reads, in one-letter code: MDEIKKDDELSQWLSTYGTITAERILGRYNISLPQDEILEAINIPSSFYRHLLQIPLKNVLNGIVIQQASDYHVYAQKLLIDYLLSGESSKEPDSQGAGTRESLEDERQRLVQLGDEFHKLELEQDNLIASSQASLMKISIDWNTKLETTLSKLNSLYKNTNSKIKKNAIRKALIKAFIHCDLVKDQSQKNKYQLIDKLNQTLAVSVGAELKESILTNLSELFQILEALNTKLDEFTDRTNHLSQQAKSFRTQFYEVILRIIELIKLLPEYKIDPAQDAINREPLYFDRTIGER.

In terms of assembly, the T4BSS is a complex nanomachine composed of several subcomplexes. This subunit is part of the Type IV Coupling Complex (T4CC), a subcomplex composed of the DotLMNYZ core and the IcmSW-LvgA adapter subunits, linked by the C-terminal tail of DotL. Six DotLMNYZ hetero-pentameric units may assemble into a hexameric nanomachine, forming an inner membrane channel for effectors to pass through. Makes significant contact with DotN and DotY, but engages weakly with DotM and DotL. DotY and DotZ are co-dependent for the assembly into the T4CC.

Its subcellular location is the cytoplasm. Component of the Dot/Icm type IVB secretion system (T4BSS), which is used to inject bacterial effector proteins into eukaryotic host cells. Part of a subcomplex which recruits effector proteins and delivers them to the core transmembrane subcomplex. DotY and DotZ play a role in effector translocation, but are not essential and do not influence the stability of the subcomplex main components. The DotY/DotZ main function is to optimize secretion by modulating the delivery trajectory of the IcmSW module and the localization of the machinery to the poles. The sequence is that of Type 4 apparatus protein DotZ from Legionella pneumophila subsp. pneumophila (strain Philadelphia 1 / ATCC 33152 / DSM 7513).